Consider the following 638-residue polypeptide: 3D-(3,5/4)-trihydroxycyclohexane-1,2-dione hydrolase (638 aa).

Glutamate 67 lines the thiamine diphosphate pocket. The interval 442-523 (SLPGDLQRLW…INIMLFDNSG (82 aa)) is thiamine pyrophosphate binding. 2 residues coordinate Mg(2+): aspartate 494 and asparagine 521.

The protein belongs to the TPP enzyme family. It depends on Mg(2+) as a cofactor. Thiamine diphosphate is required as a cofactor.

It catalyses the reaction 3D-3,5/4-trihydroxycyclohexane-1,2-dione + H2O = 5-deoxy-D-glucuronate + H(+). Its pathway is polyol metabolism; myo-inositol degradation into acetyl-CoA; acetyl-CoA from myo-inositol: step 3/7. In terms of biological role, involved in the cleavage of the C1-C2 bond of 3D-(3,5/4)-trihydroxycyclohexane-1,2-dione (THcHDO) to yield 5-deoxy-glucuronate (5DG). The polypeptide is 3D-(3,5/4)-trihydroxycyclohexane-1,2-dione hydrolase (Listeria monocytogenes serovar 1/2a (strain ATCC BAA-679 / EGD-e)).